The following is a 206-amino-acid chain: Peptidyl-tRNA hydrolase (206 aa).

Position 19 (Y19) interacts with tRNA. Catalysis depends on H24, which acts as the Proton acceptor. Positions 70, 72, and 118 each coordinate tRNA.

This sequence belongs to the PTH family. Monomer.

Its subcellular location is the cytoplasm. It catalyses the reaction an N-acyl-L-alpha-aminoacyl-tRNA + H2O = an N-acyl-L-amino acid + a tRNA + H(+). Functionally, hydrolyzes ribosome-free peptidyl-tRNAs (with 1 or more amino acids incorporated), which drop off the ribosome during protein synthesis, or as a result of ribosome stalling. Its function is as follows. Catalyzes the release of premature peptidyl moieties from peptidyl-tRNA molecules trapped in stalled 50S ribosomal subunits, and thus maintains levels of free tRNAs and 50S ribosomes. This chain is Peptidyl-tRNA hydrolase, found in Prochlorococcus marinus (strain MIT 9303).